Reading from the N-terminus, the 76-residue chain is UPF0291 protein MW2494 (76 aa).

It belongs to the UPF0291 family.

It localises to the cytoplasm. This chain is UPF0291 protein MW2494, found in Staphylococcus aureus (strain MW2).